Consider the following 332-residue polypeptide: Ribosomal RNA small subunit methyltransferase H (332 aa).

Residues 34-36 (GGH), aspartate 59, phenylalanine 86, aspartate 112, and glutamine 119 contribute to the S-adenosyl-L-methionine site.

This sequence belongs to the methyltransferase superfamily. RsmH family.

The protein localises to the cytoplasm. It catalyses the reaction cytidine(1402) in 16S rRNA + S-adenosyl-L-methionine = N(4)-methylcytidine(1402) in 16S rRNA + S-adenosyl-L-homocysteine + H(+). In terms of biological role, specifically methylates the N4 position of cytidine in position 1402 (C1402) of 16S rRNA. The chain is Ribosomal RNA small subunit methyltransferase H from Chlorobium phaeobacteroides (strain BS1).